The following is a 92-amino-acid chain: Putative septation protein SpoVG (92 aa).

It belongs to the SpoVG family.

In terms of biological role, could be involved in septation. The chain is Putative septation protein SpoVG from Clostridium botulinum (strain Eklund 17B / Type B).